We begin with the raw amino-acid sequence, 171 residues long: 3-hydroxydecanoyl-[acyl-carrier-protein] dehydratase (171 aa).

Residue H70 is part of the active site.

It belongs to the thioester dehydratase family. FabA subfamily. As to quaternary structure, homodimer.

The protein resides in the cytoplasm. It carries out the reaction a (3R)-hydroxyacyl-[ACP] = a (2E)-enoyl-[ACP] + H2O. The enzyme catalyses (3R)-hydroxydecanoyl-[ACP] = (2E)-decenoyl-[ACP] + H2O. The catalysed reaction is (2E)-decenoyl-[ACP] = (3Z)-decenoyl-[ACP]. It participates in lipid metabolism; fatty acid biosynthesis. In terms of biological role, necessary for the introduction of cis unsaturation into fatty acids. Catalyzes the dehydration of (3R)-3-hydroxydecanoyl-ACP to E-(2)-decenoyl-ACP and then its isomerization to Z-(3)-decenoyl-ACP. Can catalyze the dehydratase reaction for beta-hydroxyacyl-ACPs with saturated chain lengths up to 16:0, being most active on intermediate chain length. The chain is 3-hydroxydecanoyl-[acyl-carrier-protein] dehydratase from Chromohalobacter salexigens (strain ATCC BAA-138 / DSM 3043 / CIP 106854 / NCIMB 13768 / 1H11).